Reading from the N-terminus, the 623-residue chain is MDLRAKHGLTLLEQLNRMRDAEQLTDVVLVAEGVSFPCHRAVLSAFSPYFRVMFTCGLRECSNRQVVLRDMPAPSLALLLEYMYSSNLPLTADNVQGISVAAFLLQMDDVFSRCQIYMIDNMDTTNCLGIYYYARDLGAEELADQAQRYLRQHFTEVCYGEEVLELEAHQLGALLSSDDLNVSREESILDVVMRWVKYCPGDVGSEEENRARHLPELLKKVRLPLVGVDYLKGTMKRNTALLVDAECLQIMEEAIEAASLDSDAPPRRLKLRYGMETTDLLLCIGNEGGGIRSRYGSYTERSFCYAPTTGRTLFITSPRYGEALGYVFAGVVTEKNEIVVSGELGARKMARHKDKNVEIFMYNKEAQGSWKHLSSAEYRDSYALSSLGENLYLIGGQMKLKNQYHITNSVERWSLQGGPWRSTAPLPMPLAYHSVVRMKGRLYVLGGRTPQSFRTDDEPDRMSNRLLEYDPETNKWNELGPMKFSKYRCSAVALNGEIYVLGGIGCEGVDRGQSRYCLNVVEIYNPDGDFWRDGPPLPWPLLTLRSNASNAGVVDGKLYVCGYYKGADRHDTITKDILQLDPWENVWTVVAKQALMHDSYDVCLVANLNPRGLMPPPADLVEE.

Positions 25-92 (TDVVLVAEGV…MYSSNLPLTA (68 aa)) constitute a BTB domain. The 110-residue stretch at 127 to 236 (CLGIYYYARD…GVDYLKGTMK (110 aa)) folds into the BACK domain. 4 Kelch repeats span residues 390 to 440 (NLYL…RMKG), 441 to 496 (RLYV…ALNG), 498 to 551 (IYVL…ASNA), and 557 to 607 (KLYV…LVAN).

This chain is Kelch repeat and BTB domain-containing protein 12 (kbtbd12), found in Danio rerio (Zebrafish).